The sequence spans 254 residues: Bacteriorhodopsin-I (254 aa).

A propeptide spanning residues 1–6 is cleaved from the precursor; it reads MSQLAL. Gln-7 is subject to Pyrrolidone carboxylic acid. Helical transmembrane passes span 16–36, 51–71, 91–111, 116–136, 144–164, 185–205, and 212–232; these read EGIWLALGTIGMLLGMLYFIA, VITILIPAIAAASYLSMFFGF, YADWLFTTPLLLLDIGLLAGA, IGALVGIDAFMIVTGLVATLT, AFWTISTISMVFLLYYLVAVF, IILVTWAIYPVAWLVGTEGLA, and ETLLFMVLDLVAKVGFGFILL. N6-(retinylidene)lysine is present on Lys-224.

Belongs to the archaeal/bacterial/fungal opsin family. The covalent binding of retinal to the apoprotein, bacterioopsin, generates bacteriorhodopsin.

The protein localises to the cell membrane. In terms of biological role, light-driven proton pump. This is Bacteriorhodopsin-I (bop1) from Haloquadratum walsbyi (strain DSM 16854 / JCM 12705 / C23).